A 680-amino-acid polypeptide reads, in one-letter code: 1-deoxy-D-xylulose-5-phosphate synthase (680 aa).

Low complexity predominate over residues 1–17 (MQQSPHSPQSQSLSASA). The interval 1–20 (MQQSPHSPQSQSLSASAVDS) is disordered. Residues His-113 and 154-156 (GHS) each bind thiamine diphosphate. Asp-185 contacts Mg(2+). Thiamine diphosphate contacts are provided by residues 186–187 (GA), Asn-214, Phe-323, and Glu-408. Position 214 (Asn-214) interacts with Mg(2+).

It belongs to the transketolase family. DXPS subfamily. Homodimer. The cofactor is Mg(2+). It depends on thiamine diphosphate as a cofactor.

The enzyme catalyses D-glyceraldehyde 3-phosphate + pyruvate + H(+) = 1-deoxy-D-xylulose 5-phosphate + CO2. Its pathway is metabolic intermediate biosynthesis; 1-deoxy-D-xylulose 5-phosphate biosynthesis; 1-deoxy-D-xylulose 5-phosphate from D-glyceraldehyde 3-phosphate and pyruvate: step 1/1. In terms of biological role, catalyzes the acyloin condensation reaction between C atoms 2 and 3 of pyruvate and glyceraldehyde 3-phosphate to yield 1-deoxy-D-xylulose-5-phosphate (DXP). This is 1-deoxy-D-xylulose-5-phosphate synthase from Psychrobacter cryohalolentis (strain ATCC BAA-1226 / DSM 17306 / VKM B-2378 / K5).